Consider the following 538-residue polypeptide: Eukaryotic translation initiation factor 3 subunit L (538 aa).

Positions 305 to 513 constitute a PCI domain; that stretch reads TFSDILLYIQ…IHIADTKVSH (209 aa).

The protein belongs to the eIF-3 subunit L family. Component of the eukaryotic translation initiation factor 3 (eIF-3) complex. The eIF-3 complex interacts with pix.

Its subcellular location is the cytoplasm. Its function is as follows. Component of the eukaryotic translation initiation factor 3 (eIF-3) complex, which is involved in protein synthesis of a specialized repertoire of mRNAs and, together with other initiation factors, stimulates binding of mRNA and methionyl-tRNAi to the 40S ribosome. The eIF-3 complex specifically targets and initiates translation of a subset of mRNAs involved in cell proliferation. The sequence is that of Eukaryotic translation initiation factor 3 subunit L from Drosophila mojavensis (Fruit fly).